A 364-amino-acid chain; its full sequence is Peroxisome biogenesis protein 3-2 (364 aa).

A helical membrane pass occupies residues 15 to 32 (VLVTAGCLGSGYLLYKLY). The stretch at 33-62 (NSHTRRLADLERELAHERENDEIIKTQMKA) forms a coiled coil.

Belongs to the peroxin-3 family.

It localises to the peroxisome membrane. In terms of biological role, involved in morphology determination of peroxisomes, but not in import of peroxisomal matrix proteins. May act as a docking factor for PEX19 and be necessary for the import of peroxisomal membrane proteins in the peroxisomes. The protein is Peroxisome biogenesis protein 3-2 (PEX3-2) of Arabidopsis thaliana (Mouse-ear cress).